The primary structure comprises 1007 residues: Calmodulin-binding transcription activator 1 (1007 aa).

Residues 18-144 (MEQLLSEAQH…YLEVKGNRTS (127 aa)) constitute a DNA-binding region (CG-1). The span at 148–164 (KENNSNSVNGTASVNID) shows a compositional bias: polar residues. The tract at residues 148–227 (KENNSNSVNG…VHGNRVRESD (80 aa)) is disordered. Over residues 165-176 (STASPTSTLSSL) the composition is skewed to low complexity. A compositionally biased stretch (polar residues) spans 183-202 (GDSQQASSVLRPSPEPQTGN). The interval 233 to 398 (DVRALDTVGN…TVECETAAAG (166 aa)) is transcription activation. 2 ANK repeats span residues 612–641 (DGQG…NINF) and 645–674 (NGWS…DAGA). IQ domains follow at residues 821-850 (LSCA…RIVK) and 844-873 (IRQR…SVGL). Residues 869-891 (WSVGLLEKIILRWRRKGNGLRGF) form a calmodulin-binding region. A coiled-coil region spans residues 915–943 (QEDEYDYLKEGRKQTEERLQKALTRVKSM). Phosphoserine is present on Ser-942.

It belongs to the CAMTA family. Expressed in roots, stems, leaves, pollen and siliques.

Its subcellular location is the nucleus. Transcription activator that binds calmodulin in a calcium-dependent manner in vitro. Binds to the DNA consensus sequence 5'-[ACG]CGCG[GTC]-3'. Regulates transcriptional activity in response to calcium signals. Involved in freezing tolerance. Involved in freezing tolerance in association with CAMTA2 and CAMTA3. Contributes together with CAMTA2 and CAMTA3 to the positive regulation of the cold-induced expression of DREB1A/CBF3, DREB1B/CBF1 and DREB1C/CBF2. Involved in drought stress responses by regulating several drought-responsive genes. Involved in auxin signaling and responses to abiotic stresses. Activates the expression of the V-PPase proton pump AVP1 in pollen. This Arabidopsis thaliana (Mouse-ear cress) protein is Calmodulin-binding transcription activator 1.